The chain runs to 304 residues: 4-diphosphocytidyl-2-C-methyl-D-erythritol kinase (304 aa).

The active site involves lysine 20. Residue 106-116 participates in ATP binding; the sequence is PVASGIGGGSG. Residue aspartate 148 is part of the active site.

The protein belongs to the GHMP kinase family. IspE subfamily.

It carries out the reaction 4-CDP-2-C-methyl-D-erythritol + ATP = 4-CDP-2-C-methyl-D-erythritol 2-phosphate + ADP + H(+). Its pathway is isoprenoid biosynthesis; isopentenyl diphosphate biosynthesis via DXP pathway; isopentenyl diphosphate from 1-deoxy-D-xylulose 5-phosphate: step 3/6. Catalyzes the phosphorylation of the position 2 hydroxy group of 4-diphosphocytidyl-2C-methyl-D-erythritol. The chain is 4-diphosphocytidyl-2-C-methyl-D-erythritol kinase from Bartonella bacilliformis (strain ATCC 35685 / KC583 / Herrer 020/F12,63).